Reading from the N-terminus, the 161-residue chain is Nucleotide-binding protein XCV3791 (161 aa).

It belongs to the YajQ family.

In terms of biological role, nucleotide-binding protein. The sequence is that of Nucleotide-binding protein XCV3791 from Xanthomonas euvesicatoria pv. vesicatoria (strain 85-10) (Xanthomonas campestris pv. vesicatoria).